We begin with the raw amino-acid sequence, 1079 residues long: Translation initiation factor IF-2 (1079 aa).

3 stretches are compositionally biased toward basic and acidic residues: residues 52–65, 75–90, and 102–134; these read VQAQ…KEGN, RDGD…KAPE, and APER…KEPQ. The disordered stretch occupies residues 52 to 488; it reads VQAQRDGGAR…RGKKDVRPAA (437 aa). Positions 150–184 are enriched in low complexity; it reads APVAKVVEAAPAETPAPEAPAVKATVTAEAAPAKT. Residues 185–194 show a composition bias toward basic and acidic residues; it reads VEPESERPQA. Over residues 276–291 the composition is skewed to low complexity; sequence AAVAQQQMQQQAAQQQ. Basic and acidic residues predominate over residues 306–327; the sequence is GGYRPEGQREGGYRPEGQREGG. Composition is skewed to low complexity over residues 348 to 370 and 380 to 398; these read EGGY…GPRP and PGAP…APRP. Positions 419–429 are enriched in gly residues; it reads PRPGGFGGAPG. Residues 461–471 are compositionally biased toward basic and acidic residues; sequence PRGRSDDDVMR. The segment covering 473 to 482 has biased composition (basic residues); that stretch reads PRGRGKRGKK. Residues 578 to 745 form the tr-type G domain; the sequence is TRPPVVTIMG…LIAIQAEILE (168 aa). Positions 587-594 are G1; that stretch reads GHVDHGKT. 587-594 contributes to the GTP binding site; it reads GHVDHGKT. The segment at 612–616 is G2; that stretch reads GITQH. The interval 633–636 is G3; sequence DTPG. Residues 633–637 and 687–690 contribute to the GTP site; these read DTPGH and NKMD. The tract at residues 687 to 690 is G4; the sequence is NKMD. Residues 723–725 are G5; sequence SAK.

The protein belongs to the TRAFAC class translation factor GTPase superfamily. Classic translation factor GTPase family. IF-2 subfamily.

It is found in the cytoplasm. In terms of biological role, one of the essential components for the initiation of protein synthesis. Protects formylmethionyl-tRNA from spontaneous hydrolysis and promotes its binding to the 30S ribosomal subunits. Also involved in the hydrolysis of GTP during the formation of the 70S ribosomal complex. In Nitratidesulfovibrio vulgaris (strain ATCC 29579 / DSM 644 / CCUG 34227 / NCIMB 8303 / VKM B-1760 / Hildenborough) (Desulfovibrio vulgaris), this protein is Translation initiation factor IF-2.